Here is a 619-residue protein sequence, read N- to C-terminus: Dihydroxy-acid dehydratase (619 aa).

Position 81 (aspartate 81) interacts with Mg(2+). Cysteine 122 serves as a coordination point for [2Fe-2S] cluster. Residues aspartate 123 and lysine 124 each coordinate Mg(2+). Lysine 124 carries the post-translational modification N6-carboxylysine. [2Fe-2S] cluster is bound at residue cysteine 195. Glutamate 492 contributes to the Mg(2+) binding site. The active-site Proton acceptor is serine 518.

This sequence belongs to the IlvD/Edd family. As to quaternary structure, homodimer. Requires [2Fe-2S] cluster as cofactor. Mg(2+) serves as cofactor.

The enzyme catalyses (2R)-2,3-dihydroxy-3-methylbutanoate = 3-methyl-2-oxobutanoate + H2O. It carries out the reaction (2R,3R)-2,3-dihydroxy-3-methylpentanoate = (S)-3-methyl-2-oxopentanoate + H2O. Its pathway is amino-acid biosynthesis; L-isoleucine biosynthesis; L-isoleucine from 2-oxobutanoate: step 3/4. It participates in amino-acid biosynthesis; L-valine biosynthesis; L-valine from pyruvate: step 3/4. In terms of biological role, functions in the biosynthesis of branched-chain amino acids. Catalyzes the dehydration of (2R,3R)-2,3-dihydroxy-3-methylpentanoate (2,3-dihydroxy-3-methylvalerate) into 2-oxo-3-methylpentanoate (2-oxo-3-methylvalerate) and of (2R)-2,3-dihydroxy-3-methylbutanoate (2,3-dihydroxyisovalerate) into 2-oxo-3-methylbutanoate (2-oxoisovalerate), the penultimate precursor to L-isoleucine and L-valine, respectively. This Synechococcus elongatus (strain ATCC 33912 / PCC 7942 / FACHB-805) (Anacystis nidulans R2) protein is Dihydroxy-acid dehydratase.